The sequence spans 329 residues: Beta-tectorin (329 aa).

Positions 1–17 (MVAVTVYLMVILAQAFA) are cleaved as a signal peptide. In terms of domain architecture, ZP spans 19–287 (PCTPNKADVI…VTCDKRKQRM (269 aa)). N-linked (GlcNAc...) asparagine glycans are attached at residues asparagine 80, asparagine 104, asparagine 116, and asparagine 145. Cysteine 204 and cysteine 264 are joined by a disulfide. The GPI-anchor amidated glycine moiety is linked to residue glycine 304. Residues 305–329 (LSRFYMLSDVIFHLLFAIGFCAILL) constitute a propeptide, removed in mature form.

In terms of assembly, may form homomeric filament after self-association or heteromeric filament after association with alpha-tectorin. The N-terminus is blocked. Post-translationally, N-glycosylated. In terms of processing, the presence of a hydrophobic C-terminus preceded by a potential cleavage site strongly suggests that tectorins are synthesized as glycosylphosphatidylinositol-linked, membrane-bound precursors. Tectorins are targeted to the apical surface of the inner ear epithelia by the lipid and proteolytically released into the extracellular compartment. As to expression, exclusively expressed in the inner ear, where it is found in basilar papilla, clear cells, supporting cells, cuboidal cells and the lagena macula.

It is found in the cell membrane. Its subcellular location is the secreted. It localises to the extracellular space. The protein localises to the extracellular matrix. One of the major non-collagenous components of the tectorial membrane. The tectorial membrane is an extracellular matrix of the inner ear that covers the neuroepithelium of the cochlea and contacts the stereocilia bundles of specialized sensory hair cells. Sound induces movement of these hair cells relative to the tectorial membrane, deflects the stereocilia and leads to fluctuations in hair-cell membrane potential, transducing sound into electrical signals. In Gallus gallus (Chicken), this protein is Beta-tectorin (TECTB).